A 362-amino-acid chain; its full sequence is MTAPKRTPLFDAHIAAGAKMVDFAGWEMPIHYGSQLKEHEIVRSDAGMFDVSHMTVIDITGADAKAWLQKLIANDVAKLGFEGKALYSGMLTPEGTVVDDLIVYLTAYGYRMVVNAGTTEKDLAWMESQKAGFDVALKVRRDLAMLAVQGPKAIQKVCSIKPELAEAIRALKVFQGLPQGEWFYARTGYTGEDGLEIMVPADQAISFFHQLQAAGVSPIGLGARDTLRLEAGMNLYGHDMDETVSPLEAGMGWTIAWEPAERKFNGREALEAQKAAGVKMKQVGLVLEGRGVLREGLKVVVESVGEGVITSGTFSPTLKHSIAIARVPAATGAAAQVDLRGTLTDVRVVKMPFVRNGKKVFE.

This sequence belongs to the GcvT family. As to quaternary structure, the glycine cleavage system is composed of four proteins: P, T, L and H.

It catalyses the reaction N(6)-[(R)-S(8)-aminomethyldihydrolipoyl]-L-lysyl-[protein] + (6S)-5,6,7,8-tetrahydrofolate = N(6)-[(R)-dihydrolipoyl]-L-lysyl-[protein] + (6R)-5,10-methylene-5,6,7,8-tetrahydrofolate + NH4(+). The glycine cleavage system catalyzes the degradation of glycine. In Chromobacterium violaceum (strain ATCC 12472 / DSM 30191 / JCM 1249 / CCUG 213 / NBRC 12614 / NCIMB 9131 / NCTC 9757 / MK), this protein is Aminomethyltransferase.